Here is a 430-residue protein sequence, read N- to C-terminus: Sulfide-quinone reductase (430 aa).

Residues 9–13, 34–36, 42–43, and Thr-105 each bind FAD; these read GGGVG, SDR, and TP. Residue Cys-156 is the Cysteine persulfide intermediate of the active site. 2 cysteine pairs are disulfide-bonded: Cys-280–Cys-422 and Cys-419–Cys-430. Residues Val-294 and Gly-314 each coordinate FAD. Ile-346 contributes to the a quinone binding site. The active-site Cysteine persulfide intermediate is Cys-347. Lys-382 lines the FAD pocket.

Belongs to the SQRD family. In terms of assembly, homotrimer. It depends on FAD as a cofactor.

The protein resides in the membrane. The enzyme catalyses n a quinone + n hydrogen sulfide + n H(+) = polysulfur(n-2) + n a quinol. Its function is as follows. Catalyzes the oxidation of hydrogen sulfide, with the help of a quinone. Consecutive reaction cycles lead to the accumulation of a polysulfide product on the active site Cys residues; these products are released when they exceed a critical length, typically as cyclooctasulfur. In Aquifex aeolicus (strain VF5), this protein is Sulfide-quinone reductase.